The chain runs to 354 residues: Peptide chain release factor 1 (354 aa).

Position 230 is an N5-methylglutamine (Gln230).

The protein belongs to the prokaryotic/mitochondrial release factor family. Methylated by PrmC. Methylation increases the termination efficiency of RF1.

It localises to the cytoplasm. Peptide chain release factor 1 directs the termination of translation in response to the peptide chain termination codons UAG and UAA. The polypeptide is Peptide chain release factor 1 (Novosphingobium aromaticivorans (strain ATCC 700278 / DSM 12444 / CCUG 56034 / CIP 105152 / NBRC 16084 / F199)).